The chain runs to 57 residues: Serine protease inhibitor Kazal-type 1 (57 aa).

The Kazal-like domain maps to 4-57; it reads LQRQANCNLKVNGCNKIYNPICGSDGITYANECLLCLENKKRQTSILVEKSGPC. 3 cysteine pairs are disulfide-bonded: C10/C39, C17/C36, and C25/C57.

The protein localises to the secreted. Functionally, serine protease inhibitor which exhibits anti-trypsin activity. In the pancreas, protects against trypsin-catalyzed premature activation of zymogens. In the male reproductive tract, binds to sperm heads where it modulates sperm capacitance by inhibiting calcium uptake and nitrogen oxide (NO) production. The polypeptide is Serine protease inhibitor Kazal-type 1 (SPINK1) (Canis lupus familiaris (Dog)).